The sequence spans 144 residues: uncharacterized protein (144 aa).

2 helical membrane passes run 10-30 (ILTR…GLGP) and 60-80 (YVFL…AIAV).

It is found in the membrane. This is an uncharacterized protein from Saccharomyces cerevisiae (strain ATCC 204508 / S288c) (Baker's yeast).